A 67-amino-acid chain; its full sequence is MRSKHNELKSPIMSCSKRTEWKSILGPLIFRQQMILTQNLNRKLKTIKACMYQIRKLSKLKALYRGL.

Belongs to the rhabdoviruses C protein family.

Seems to stimulates transcription by the viral polymerase. May play a role in viral pathogenesis or transmission by insects vectors. The polypeptide is Protein C' (P) (Aedes (Bovine)).